The sequence spans 212 residues: Probable U3 small nucleolar RNA-associated protein 11 (212 aa).

It belongs to the UTP11 family. In terms of assembly, component of the ribosomal small subunit (SSU) processome.

Its subcellular location is the nucleus. The protein resides in the nucleolus. Functionally, involved in nucleolar processing of pre-18S ribosomal RNA. The chain is Probable U3 small nucleolar RNA-associated protein 11 from Plasmodium falciparum (isolate 3D7).